The following is a 213-amino-acid chain: 3,4-dihydroxy-2-butanone 4-phosphate synthase (213 aa).

D-ribulose 5-phosphate contacts are provided by residues 37–38 (RE), aspartate 42, 150–154 (RAGHT), and glutamate 174. Glutamate 38 contacts Mg(2+). Histidine 153 contacts Mg(2+).

It belongs to the DHBP synthase family. Homodimer. Requires Mg(2+) as cofactor. The cofactor is Mn(2+).

It carries out the reaction D-ribulose 5-phosphate = (2S)-2-hydroxy-3-oxobutyl phosphate + formate + H(+). The protein operates within cofactor biosynthesis; riboflavin biosynthesis; 2-hydroxy-3-oxobutyl phosphate from D-ribulose 5-phosphate: step 1/1. Its function is as follows. Catalyzes the conversion of D-ribulose 5-phosphate to formate and 3,4-dihydroxy-2-butanone 4-phosphate. The protein is 3,4-dihydroxy-2-butanone 4-phosphate synthase of Wigglesworthia glossinidia brevipalpis.